A 754-amino-acid chain; its full sequence is Glutathione biosynthesis bifunctional protein GshAB (754 aa).

The interval 1–333 (MHINQLLQHA…KAQKLNDKIA (333 aa)) is glutamate--cysteine ligase. The 264-residue stretch at 489 to 752 (KKILRENGYP…LAKLFPEIST (264 aa)) folds into the ATP-grasp domain. 516-574 (SQIKNKPIVVKPKTTNFGLGISIFETAASHNDYEKALDIAFIEDYSVLVEEFIPGTEYR) contacts ATP. Residues Asp-696, Glu-717, and Asn-719 each contribute to the Mg(2+) site. Mn(2+)-binding residues include Asp-696, Glu-717, and Asn-719.

In the N-terminal section; belongs to the glutamate--cysteine ligase type 1 family. Type 2 subfamily. In terms of assembly, monomer. Mg(2+) is required as a cofactor. Requires Mn(2+) as cofactor.

The enzyme catalyses L-cysteine + L-glutamate + ATP = gamma-L-glutamyl-L-cysteine + ADP + phosphate + H(+). It carries out the reaction gamma-L-glutamyl-L-cysteine + glycine + ATP = glutathione + ADP + phosphate + H(+). Its pathway is sulfur metabolism; glutathione biosynthesis; glutathione from L-cysteine and L-glutamate: step 1/2. It functions in the pathway sulfur metabolism; glutathione biosynthesis; glutathione from L-cysteine and L-glutamate: step 2/2. Functionally, synthesizes glutathione from L-glutamate and L-cysteine via gamma-L-glutamyl-L-cysteine. This chain is Glutathione biosynthesis bifunctional protein GshAB, found in Streptococcus mutans serotype c (strain ATCC 700610 / UA159).